A 333-amino-acid chain; its full sequence is AQTTAPSVYPLAPGCGDTTSSTVTLGCLVKGYFPEPVTVTWNSGALSSDVHTFPAVLQSGLYTLTSSVTSSTWPSQTVTCNVAHPASSTKVDKKVERRNGGIGHKCPTCPTCHKCPVPELLGGPSVFIFPPKPKDILLISQNAKVTCVVVDVSEEEPDVQFSWFVNNVEVHTAQTQPREEQYNSTFRVVSALPIQHQDWMSGKEFKCKVNNKALPSPIEKTISKPKGLVRKPQVYVMGPPTEQLTEQTVSLTCLTSGFLPNDIGVEWTSNGHIEKNYKNTEPVMDSDGSFFMYSKLNVERSRWDSRAPFVCSVVHEGLHNHHVEKSISRPPGK.

Ig-like domains lie at 6–96 (PSVY…KKVE), 124–223 (PSVF…KTIS), and 232–328 (PQVY…KSIS). 3 cysteine pairs are disulfide-bonded: C27–C80, C147–C207, and C253–C311.

The chain is Ig gamma-2B chain C region (Igh-1a) from Rattus norvegicus (Rat).